A 223-amino-acid chain; its full sequence is Movement and silencing protein TGBp1 (223 aa).

The (+)RNA virus helicase ATP-binding domain occupies 1-136; sequence METVLSLLNE…QILRDLGYNI (136 aa). The region spanning 137–223 is the (+)RNA virus helicase C-terminal domain; it reads ASSKEDIVEK…HRSKLVLVSN (87 aa).

It belongs to the Tymovirales TGBp1 protein family. In terms of assembly, homodimer and homooligomer. Interacts with capsid protein. Interacts with host AGO1; this interaction targets the host protein for degradation, thereby suppressing the antiviral RNA silencing.

Its subcellular location is the host cytoplasm. Functionally, transports viral genome to neighboring plant cells directly through plasmosdesmata, without any budding. The movement protein allows efficient cell to cell propagation, by bypassing the host cell wall barrier. Increases plasmodesma size exclusion limit. Acts as a suppressor of RNA-mediated gene silencing, also known as post-transcriptional gene silencing (PTGS), a mechanism of plant viral defense that limits the accumulation of viral RNAs. In Crataegus (hawthorn), this protein is Movement and silencing protein TGBp1.